The primary structure comprises 147 residues: Hemoglobin subunit beta (147 aa).

A Globin domain is found at 3-147 (HWTPEEKQYI…VAHALALGYH (145 aa)). 2 residues coordinate heme b: H64 and H93.

This sequence belongs to the globin family. As to quaternary structure, heterotetramer of two alpha-D chains and two beta chains. As to expression, red blood cells.

In terms of biological role, involved in oxygen transport from the lung to the various peripheral tissues. The chain is Hemoglobin subunit beta (HBB) from Chelonoidis niger (Galapagos giant tortoise).